Here is a 339-residue protein sequence, read N- to C-terminus: DNA-directed RNA polymerase subunit alpha (339 aa).

The interval 1–235 (MVIQKNWQEL…DQLQIFVNFE (235 aa)) is alpha N-terminal domain (alpha-NTD). Residues 251 to 339 (FNPALLKKVD…DLAKRFEEHY (89 aa)) form an alpha C-terminal domain (alpha-CTD) region.

Belongs to the RNA polymerase alpha chain family. As to quaternary structure, homodimer. The RNAP catalytic core consists of 2 alpha, 1 beta, 1 beta' and 1 omega subunit. When a sigma factor is associated with the core the holoenzyme is formed, which can initiate transcription.

The catalysed reaction is RNA(n) + a ribonucleoside 5'-triphosphate = RNA(n+1) + diphosphate. Its function is as follows. DNA-dependent RNA polymerase catalyzes the transcription of DNA into RNA using the four ribonucleoside triphosphates as substrates. The polypeptide is DNA-directed RNA polymerase subunit alpha (Methylobacterium nodulans (strain LMG 21967 / CNCM I-2342 / ORS 2060)).